Reading from the N-terminus, the 432-residue chain is CLOCK-interacting pacemaker (432 aa).

Disordered regions lie at residues 71-98 (ADSD…SEDM) and 194-315 (SYTK…SSPL). Phosphoserine is present on Ser246. Positions 272 to 283 (SPQTLQPVSSSH) are enriched in polar residues. The stretch at 364–395 (EITLKTKELIRQNQATQAELDQLKEQTQMFIE) forms a coiled coil. Residues 408-432 (LQASLTSGSSHSGSDLDTLSDHPDV) are disordered. Low complexity predominate over residues 411–424 (SLTSGSSHSGSDLD).

In terms of assembly, interacts with CLOCK. Forms a ternary complex with the CLOCK-BMAL1 heterodimer. Interacts with CAD and HSPA5. As to expression, expressed in the heart, kidney and liver and shows a circadian oscillation in these tissues with a peak at circadian time 14 hours (at protein level). Expressed in the brain, including the suprachiasmatic nucleus (SCN) of the brain, and in multiple peripheral tissues such as heart, liver and kidney. Exhibits a circadian oscillation in the peripheral tissues with a peak at circadian time 14 hours.

It is found in the nucleus. Its subcellular location is the cytoplasm. The protein localises to the cytosol. Transcriptional repressor which may act as a negative-feedback regulator of CLOCK-BMAL1 transcriptional activity in the circadian-clock mechanism. May stimulate BMAL1-dependent phosphorylation of CLOCK. However, the physiological relevance of these observations is unsure, since experiments in knockout mice showed that CIPC is not critially required for basic circadian clock. The sequence is that of CLOCK-interacting pacemaker (Cipc) from Mus musculus (Mouse).